The following is a 420-amino-acid chain: Beta-arrestin-2 (420 aa).

At tyrosine 48 the chain carries Phosphotyrosine. Hydroxyproline; by PHD2 is present on residues proline 176 and proline 181. The interval 240–409 is interaction with TRAF6; the sequence is ADICLFSTAQ…EDFARLRLKG (170 aa). Serine 360 carries the phosphoserine modification. The tract at residues 374-420 is interaction with AP2B1; sequence PETDAPVDTNLIEFETNYATDDDIVFEDFARLRLKGLKDEDYDDQFC. Threonine 393 bears the Phosphothreonine mark. The short motif at 396 to 406 is the [DE]-X(1,2)-F-X-X-[FL]-X-X-X-R motif element; sequence DIVFEDFARLR.

The protein belongs to the arrestin family. Homooligomer; the self-association is mediated by InsP6-binding. Heterooligomer with ARRB1; the association is mediated by InsP6-binding. Interacts with ADRB2 and CHRM2. Interacts with PDE4A. Interacts with PDE4D. Interacts with MAPK10, MAPK1 and MAPK3. Interacts with DRD2. Interacts with FSHR. Interacts with CLTC. Interacts with HTR2C. Interacts with CRR5. Interacts with CXCR4. Interacts with SRC. Interacts with DUSP16; the interaction is interrupted by stimulation of AGTR1 and activation of MAPK10. Interacts with CHUK; the interaction is enhanced stimulation of ADRB2. Interacts with RELA. Interacts with MDM2; the interaction is enhanced by activation of GPCRs. Interacts with SLC9A5. Interacts with TRAF6. Interacts with IGF1R. Interacts with ENG. Interacts with KIR2DL1, KIR2DL3 and KIR2DL4. Interacts with LDLR. Interacts with AP2B1. Interacts with C5AR1. Interacts with RAF1. Interacts with MAP2K1. Interacts with MAPK1. Interacts with MAPK10; the interaction enhances MAPK10 activation by MAP3K5. Interacts with MAP2K4; the interaction is enhanced by presence of MAP3K5 and MAPK10. Interacts with MAP3K5. Interacts with AKT1. Interacts with IKBKB and MAP3K14. Interacts with SMO (activated). Interacts with GSK3A and GSK3B. Associates with protein phosphatase 2A (PP2A). Interacts with CXCR4; the interaction is dependent on C-terminal phosphorylation of CXCR4 and allows activation of MAPK1 and MAPK3. Interacts with GPR143. Interacts with HCK and CXCR1 (phosphorylated). Interacts with ACKR3 and ACKR4. Interacts with ARRDC1; the interaction is direct. Interacts with GPR61, GPR62 and GPR135. Interacts (via NACHT and LRR domains) with NLRP3; this interaction is direct and inducible by omega-3 polyunsaturated fatty acids (PUFAs). Interacts with FFAR4 (via C-terminus); this interaction is stimulated by long-chain fatty acids (LCFAs). Interacts with GPR35. Interacts with GPR84. Interacts with TIGIT; this interaction inhibits the NF-kappa-B pathway. Interacts with TGFBR3. Post-translationally, phosphorylated at Thr-382 in the cytoplasm; probably dephosphorylated at the plasma membrane. The phosphorylation does not regulate internalization and recycling of ADRB2, interaction with clathrin or AP2B1. The ubiquitination status appears to regulate the formation and trafficking of beta-arrestin-GPCR complexes and signaling. Ubiquitination appears to occur GPCR-specific. Ubiquitinated by MDM2; the ubiquitination is required for rapid internalization of ADRB2. Deubiquitinated by USP33; the deubiquitination leads to a dissociation of the beta-arrestin-GPCR complex. Stimulation of a class A GPCR, such as ADRB2, induces transient ubiquitination and subsequently promotes association with USP33. Stimulation of a class B GPCR promotes a sustained ubiquitination. Deubiquitinated by USP20; allowing USP20 to deubiquitinate TRAF6 leading to inhibition of NF-kappa-B signaling. In terms of processing, hydroxylation by PHD2 modulates the rate of internalization by slowing down recruitment to the plasma membrane and inhibiting subsequent co-internalization with class A receptors. In terms of tissue distribution, found in a variety of tissues. The short isoform is the most abundant form in all tissues.

The protein resides in the cytoplasm. The protein localises to the nucleus. It localises to the cell membrane. Its subcellular location is the membrane. It is found in the clathrin-coated pit. The protein resides in the cytoplasmic vesicle. Functionally, functions in regulating agonist-mediated G-protein coupled receptor (GPCR) signaling by mediating both receptor desensitization and resensitization processes. During homologous desensitization, beta-arrestins bind to the GPRK-phosphorylated receptor and sterically preclude its coupling to the cognate G-protein; the binding appears to require additional receptor determinants exposed only in the active receptor conformation. The beta-arrestins target many receptors for internalization by acting as endocytic adapters (CLASPs, clathrin-associated sorting proteins) and recruiting the GPRCs to the adapter protein 2 complex 2 (AP-2) in clathrin-coated pits (CCPs). However, the extent of beta-arrestin involvement appears to vary significantly depending on the receptor, agonist and cell type. Internalized arrestin-receptor complexes traffic to intracellular endosomes, where they remain uncoupled from G-proteins. Two different modes of arrestin-mediated internalization occur. Class A receptors, like ADRB2, OPRM1, ENDRA, D1AR and ADRA1B dissociate from beta-arrestin at or near the plasma membrane and undergo rapid recycling. Class B receptors, like AVPR2, AGTR1, NTSR1, TRHR and TACR1 internalize as a complex with arrestin and traffic with it to endosomal vesicles, presumably as desensitized receptors, for extended periods of time. Receptor resensitization then requires that receptor-bound arrestin is removed so that the receptor can be dephosphorylated and returned to the plasma membrane. Mediates endocytosis of CCR7 following ligation of CCL19 but not CCL21. Involved in internalization of P2RY1, P2RY4, P2RY6 and P2RY11 and ATP-stimulated internalization of P2RY2. Involved in phosphorylation-dependent internalization of OPRD1 and subsequent recycling or degradation. Involved in ubiquitination of IGF1R. Beta-arrestins function as multivalent adapter proteins that can switch the GPCR from a G-protein signaling mode that transmits short-lived signals from the plasma membrane via small molecule second messengers and ion channels to a beta-arrestin signaling mode that transmits a distinct set of signals that are initiated as the receptor internalizes and transits the intracellular compartment. Acts as a signaling scaffold for MAPK pathways such as MAPK1/3 (ERK1/2) and MAPK10 (JNK3). ERK1/2 and JNK3 activated by the beta-arrestin scaffold are largely excluded from the nucleus and confined to cytoplasmic locations such as endocytic vesicles, also called beta-arrestin signalosomes. Acts as a signaling scaffold for the AKT1 pathway. GPCRs for which the beta-arrestin-mediated signaling relies on both ARRB1 and ARRB2 (codependent regulation) include ADRB2, F2RL1 and PTH1R. For some GPCRs the beta-arrestin-mediated signaling relies on either ARRB1 or ARRB2 and is inhibited by the other respective beta-arrestin form (reciprocal regulation). Increases ERK1/2 signaling in AGTR1- and AVPR2-mediated activation (reciprocal regulation). Involved in CCR7-mediated ERK1/2 signaling involving ligand CCL19. Is involved in type-1A angiotensin II receptor/AGTR1-mediated ERK activity. Is involved in type-1A angiotensin II receptor/AGTR1-mediated MAPK10 activity. Is involved in dopamine-stimulated AKT1 activity in the striatum by disrupting the association of AKT1 with its negative regulator PP2A. Involved in AGTR1-mediated chemotaxis. Appears to function as signaling scaffold involved in regulation of MIP-1-beta-stimulated CCR5-dependent chemotaxis. Involved in attenuation of NF-kappa-B-dependent transcription in response to GPCR or cytokine stimulation by interacting with and stabilizing CHUK. Suppresses UV-induced NF-kappa-B-dependent activation by interacting with CHUK. The function is promoted by stimulation of ADRB2 and dephosphorylation of ARRB2. Involved in p53/TP53-mediated apoptosis by regulating MDM2 and reducing the MDM2-mediated degradation of p53/TP53. May serve as nuclear messenger for GPCRs. Upon stimulation of OR1D2, may be involved in regulation of gene expression during the early processes of fertilization. Also involved in regulation of receptors other than GPCRs. Involved in endocytosis of TGFBR2 and TGFBR3 and down-regulates TGF-beta signaling such as NF-kappa-B activation. Involved in endocytosis of low-density lipoprotein receptor/LDLR. Involved in endocytosis of smoothened homolog/Smo, which also requires GRK2. Involved in endocytosis of SLC9A5. Involved in endocytosis of ENG and subsequent TGF-beta-mediated ERK activation and migration of epithelial cells. Involved in Toll-like receptor and IL-1 receptor signaling through the interaction with TRAF6 which prevents TRAF6 autoubiquitination and oligomerization required for activation of NF-kappa-B and JUN. Involved in insulin resistance by acting as insulin-induced signaling scaffold for SRC, AKT1 and INSR. Involved in regulation of inhibitory signaling of natural killer cells by recruiting PTPN6 and PTPN11 to KIR2DL1. Involved in IL8-mediated granule release in neutrophils. Involved in the internalization of the atypical chemokine receptor ACKR3. Acts as an adapter protein coupling FFAR4 receptor to specific downstream signaling pathways, as well as mediating receptor endocytosis. During the activation step of NLRP3 inflammasome, directly associates with NLRP3 leading to inhibition of pro-inflammatory cytokine release and inhibition of inflammation. The polypeptide is Beta-arrestin-2 (ARRB2) (Bos taurus (Bovine)).